A 1515-amino-acid polypeptide reads, in one-letter code: Glutamate synthase [NADPH] large chain (1515 aa).

A propeptide spanning residues 1–36 is cleaved from the precursor; the sequence is MTTELNQGEQFVADFRANAAALTTANAYNPEDEHDA. Catalysis depends on cysteine 37, which acts as the For GATase activity. The Glutamine amidotransferase type-2 domain occupies 37-432; it reads CGVGFIAAID…PGEMIAVDLQ (396 aa). The disordered stretch occupies residues 916–937; it reads AKSDSGEGGEDPARFRPDKNGD. The segment covering 926 to 936 has biased composition (basic and acidic residues); the sequence is DPARFRPDKNG. Residues 1085–1142 and 1086–1142 each bind FMN; these read LSEV…IMVR and SEVH…IMVR. [3Fe-4S] cluster contacts are provided by cysteine 1138, cysteine 1144, and cysteine 1149.

Belongs to the glutamate synthase family. Aggregate of 4 catalytic active heterodimers, consisting of a large and a small subunit. Requires [3Fe-4S] cluster as cofactor. It depends on FAD as a cofactor. The cofactor is FMN.

It catalyses the reaction 2 L-glutamate + NADP(+) = L-glutamine + 2-oxoglutarate + NADPH + H(+). The protein operates within amino-acid biosynthesis; L-glutamate biosynthesis via GLT pathway; L-glutamate from 2-oxoglutarate and L-glutamine (NADP(+) route): step 1/1. Its pathway is energy metabolism; nitrogen metabolism. This chain is Glutamate synthase [NADPH] large chain (gltB), found in Azospirillum brasilense.